A 376-amino-acid chain; its full sequence is Anhydro-N-acetylmuramic acid kinase (376 aa).

Residue 11-18 (GTSMDGVD) participates in ATP binding.

Belongs to the anhydro-N-acetylmuramic acid kinase family.

It catalyses the reaction 1,6-anhydro-N-acetyl-beta-muramate + ATP + H2O = N-acetyl-D-muramate 6-phosphate + ADP + H(+). Its pathway is amino-sugar metabolism; 1,6-anhydro-N-acetylmuramate degradation. It functions in the pathway cell wall biogenesis; peptidoglycan recycling. Functionally, catalyzes the specific phosphorylation of 1,6-anhydro-N-acetylmuramic acid (anhMurNAc) with the simultaneous cleavage of the 1,6-anhydro ring, generating MurNAc-6-P. Is required for the utilization of anhMurNAc either imported from the medium or derived from its own cell wall murein, and thus plays a role in cell wall recycling. The polypeptide is Anhydro-N-acetylmuramic acid kinase (Acinetobacter baylyi (strain ATCC 33305 / BD413 / ADP1)).